We begin with the raw amino-acid sequence, 268 residues long: Ribosomal RNA small subunit methyltransferase A (268 aa).

Positions 12, 14, 38, 59, 82, and 107 each coordinate S-adenosyl-L-methionine.

The protein belongs to the class I-like SAM-binding methyltransferase superfamily. rRNA adenine N(6)-methyltransferase family. RsmA subfamily.

The protein resides in the cytoplasm. The catalysed reaction is adenosine(1518)/adenosine(1519) in 16S rRNA + 4 S-adenosyl-L-methionine = N(6)-dimethyladenosine(1518)/N(6)-dimethyladenosine(1519) in 16S rRNA + 4 S-adenosyl-L-homocysteine + 4 H(+). Its function is as follows. Specifically dimethylates two adjacent adenosines (A1518 and A1519) in the loop of a conserved hairpin near the 3'-end of 16S rRNA in the 30S particle. May play a critical role in biogenesis of 30S subunits. The polypeptide is Ribosomal RNA small subunit methyltransferase A (Aster yellows witches'-broom phytoplasma (strain AYWB)).